The chain runs to 525 residues: MLGRTLREVSSALKQGHITPTELCKKCLSLIKKTKYLNAYITVSEEVALKQAEESEKRYKQGQSLGDLDGIPVAVKDNFSTSGIETTCASNMLKGYLPPYNATVVQRLLDQGALLMGKTNLDEFAMGSGSTDGVFGPVKNPWTYSKQYRERSRQDAQEDSHWLITGGSSGGSAAAVAAFTCFAALGSDTGGSTRNPAAHCGTVGFKPSYGLVSRHGLIPLVNSMDVPGIFTRCVDDTAIVLGVLAGHDPKDSTTVNDPVKPTTLPSVPDVSGLCIGIPKEYLVPELSSEIRSLWSQAADLFEAEGARVIEVCLPHTCYSIVCYHVLCTSEVASNMARFDGLQYGHRSAVDMSSTEALYAATRQEGFNDVVKGRILSGNFFLLKENYENYFVKAQKVRRLIVNDFVNVFGSGVDVLLTPTTLTQAVPYLEFIKEDNRTRSAQDDIFTQAVNMAGLPAVNVPVALSSQGLPIGLQLIGRAFCDQQLLTVAKWFEKQVQFPVIQLQDLMDDGSLVPENGKLTSGSLTQ.

Residues lysine 76 and serine 168 each act as charge relay system in the active site. The Acyl-ester intermediate role is filled by serine 192.

This sequence belongs to the amidase family. GatA subfamily. Subunit of the heterotrimeric GatCAB amidotransferase (AdT) complex, composed of A (QRSL1), B (GATB) and C (GATC) subunits.

Its subcellular location is the mitochondrion. It catalyses the reaction L-glutamyl-tRNA(Gln) + L-glutamine + ATP + H2O = L-glutaminyl-tRNA(Gln) + L-glutamate + ADP + phosphate + H(+). Its function is as follows. Allows the formation of correctly charged Gln-tRNA(Gln) through the transamidation of misacylated Glu-tRNA(Gln) in the mitochondria. The reaction takes place in the presence of glutamine and ATP through an activated gamma-phospho-Glu-tRNA(Gln). This is Glutamyl-tRNA(Gln) amidotransferase subunit A, mitochondrial (Qrsl1) from Rattus norvegicus (Rat).